A 332-amino-acid polypeptide reads, in one-letter code: MKIVFAGTPEFAAQAMRAIHAAGHEIVLALTQPDRRAGRGMHLQASPVKEFALEKNIPVLQPETLRRNNKDPEKQQQAEDAYRALINTNFDAMVVVAYGLILPQEILDITQQAPRFGSFNIHASLLPRWRGAAPIQRAIEAGDAKTGVCIMQMEAGLDTGDVVLTADLAIASDETSSSLHDRLAALGAGLIVDALSLLQDGKGLSRTPQPALGVTYAEKILKAEADLDWSLSAREIDARIRAFNPFPGAISNLNAETIKLWKSRLADEDAYSEAGPIGAVIGFSEDGVFVRCGDGVIEILEAQKPGGKKMNAKTCLQSVDAPEKLLCFQTKA.

Residue Ser-124–Pro-127 coordinates (6S)-5,6,7,8-tetrahydrofolate.

Belongs to the Fmt family.

It catalyses the reaction L-methionyl-tRNA(fMet) + (6R)-10-formyltetrahydrofolate = N-formyl-L-methionyl-tRNA(fMet) + (6S)-5,6,7,8-tetrahydrofolate + H(+). Its function is as follows. Attaches a formyl group to the free amino group of methionyl-tRNA(fMet). The formyl group appears to play a dual role in the initiator identity of N-formylmethionyl-tRNA by promoting its recognition by IF2 and preventing the misappropriation of this tRNA by the elongation apparatus. This Polynucleobacter asymbioticus (strain DSM 18221 / CIP 109841 / QLW-P1DMWA-1) (Polynucleobacter necessarius subsp. asymbioticus) protein is Methionyl-tRNA formyltransferase.